A 327-amino-acid chain; its full sequence is Probable cell division protein WhiA (327 aa).

Residues 275–308 (SLEELGRLADPPMTKDAVAGRIRRLLSMADRKAK) constitute a DNA-binding region (H-T-H motif).

It belongs to the WhiA family.

Involved in cell division and chromosome segregation. The polypeptide is Probable cell division protein WhiA (Mycobacterium leprae (strain Br4923)).